We begin with the raw amino-acid sequence, 207 residues long: LexA repressor (207 aa).

Positions 28 to 48 form a DNA-binding region, H-T-H motif; that stretch reads RAEISRELGFKSANAAEEHLK. Catalysis depends on for autocatalytic cleavage activity residues Ser123 and Lys160.

Belongs to the peptidase S24 family. Homodimer.

The catalysed reaction is Hydrolysis of Ala-|-Gly bond in repressor LexA.. In terms of biological role, represses a number of genes involved in the response to DNA damage (SOS response), including recA and lexA. In the presence of single-stranded DNA, RecA interacts with LexA causing an autocatalytic cleavage which disrupts the DNA-binding part of LexA, leading to derepression of the SOS regulon and eventually DNA repair. This is LexA repressor from Haemophilus influenzae (strain ATCC 51907 / DSM 11121 / KW20 / Rd).